A 456-amino-acid polypeptide reads, in one-letter code: UDP-N-acetylglucosamine 1-carboxyvinyltransferase (456 aa).

Position 34–35 (34–35 (KN)) interacts with phosphoenolpyruvate. Arg104 is a UDP-N-acetyl-alpha-D-glucosamine binding site. Cys128 acts as the Proton donor in catalysis. Cys128 carries the 2-(S-cysteinyl)pyruvic acid O-phosphothioketal modification. The UDP-N-acetyl-alpha-D-glucosamine site is built by Asp319 and Ile341.

Belongs to the EPSP synthase family. MurA subfamily.

The protein localises to the cytoplasm. It catalyses the reaction phosphoenolpyruvate + UDP-N-acetyl-alpha-D-glucosamine = UDP-N-acetyl-3-O-(1-carboxyvinyl)-alpha-D-glucosamine + phosphate. It participates in cell wall biogenesis; peptidoglycan biosynthesis. In terms of biological role, cell wall formation. Adds enolpyruvyl to UDP-N-acetylglucosamine. In Prochlorococcus marinus (strain AS9601), this protein is UDP-N-acetylglucosamine 1-carboxyvinyltransferase.